Here is a 553-residue protein sequence, read N- to C-terminus: Transcriptional regulator HilA (553 aa).

A DNA-binding region (ompR/PhoB-type) is located at residues asparagine 11–arginine 107. Aspartate 62 is modified (4-aspartylphosphate). Residues alanine 372–arginine 405 form a TPR repeat.

Functionally, the main transcriptional regulator of the Salmonella pathogenicity island 1 (SPI1) gene expression. Activates the expression of invasion genes by a direct action at their promoters and also indirectly by increasing the level of InvF. Also binds upstream of prgH and directly activates the expression of prgHIJK operon. In Salmonella typhimurium (strain LT2 / SGSC1412 / ATCC 700720), this protein is Transcriptional regulator HilA (hilA).